A 474-amino-acid chain; its full sequence is Cysteine--tRNA ligase (474 aa).

Residue cysteine 27 participates in Zn(2+) binding. The short motif at 29–39 is the 'HIGH' region element; the sequence is PTVYNYIHIGN. Zn(2+)-binding residues include cysteine 212, histidine 237, and glutamate 241. The short motif at 271–275 is the 'KMSKS' region element; the sequence is KMSKS. ATP is bound at residue lysine 274.

Belongs to the class-I aminoacyl-tRNA synthetase family. As to quaternary structure, monomer. Requires Zn(2+) as cofactor.

It is found in the cytoplasm. It carries out the reaction tRNA(Cys) + L-cysteine + ATP = L-cysteinyl-tRNA(Cys) + AMP + diphosphate. This is Cysteine--tRNA ligase from Lactobacillus delbrueckii subsp. bulgaricus (strain ATCC BAA-365 / Lb-18).